The sequence spans 425 residues: 5-nitroanthranilic acid aminohydrolase (425 aa).

Aspartate 88 is an active-site residue. The active-site Proton acceptor is glutamate 158.

It belongs to the peptidase M20A family. Requires Co(2+) as cofactor. Mn(2+) serves as cofactor. The cofactor is Zn(2+). Fe(2+) is required as a cofactor. It depends on Ni(2+) as a cofactor.

The enzyme catalyses 5-nitroanthranilate + H2O + H(+) = 5-nitrosalicylate + NH4(+). Catalyzes the deamination of 5-nitroanthranilate (5NAA) to 5-nitrosalicylate (5NSA), the first step in biodegradation of 5-nitroanthranilate. The sequence is that of 5-nitroanthranilic acid aminohydrolase (naaA) from Bradyrhizobium sp.